Consider the following 319-residue polypeptide: Acetyl-coenzyme A carboxylase carboxyl transferase subunit alpha (319 aa).

The region spanning 35 to 292 (EISKLMRRLV…KKTIAEALAE (258 aa)) is the CoA carboxyltransferase C-terminal domain.

It belongs to the AccA family. As to quaternary structure, acetyl-CoA carboxylase is a heterohexamer composed of biotin carboxyl carrier protein (AccB), biotin carboxylase (AccC) and two subunits each of ACCase subunit alpha (AccA) and ACCase subunit beta (AccD).

It localises to the cytoplasm. It carries out the reaction N(6)-carboxybiotinyl-L-lysyl-[protein] + acetyl-CoA = N(6)-biotinyl-L-lysyl-[protein] + malonyl-CoA. Its pathway is lipid metabolism; malonyl-CoA biosynthesis; malonyl-CoA from acetyl-CoA: step 1/1. Functionally, component of the acetyl coenzyme A carboxylase (ACC) complex. First, biotin carboxylase catalyzes the carboxylation of biotin on its carrier protein (BCCP) and then the CO(2) group is transferred by the carboxyltransferase to acetyl-CoA to form malonyl-CoA. The sequence is that of Acetyl-coenzyme A carboxylase carboxyl transferase subunit alpha from Desulfitobacterium hafniense (strain DSM 10664 / DCB-2).